A 128-amino-acid chain; its full sequence is Large ribosomal subunit protein bL17 (128 aa).

It belongs to the bacterial ribosomal protein bL17 family. Part of the 50S ribosomal subunit. Contacts protein L32.

The sequence is that of Large ribosomal subunit protein bL17 from Glaesserella parasuis serovar 5 (strain SH0165) (Haemophilus parasuis).